The sequence spans 166 residues: Bud site selection protein 20 (166 aa).

The short motif at K7 to R16 is the Nuclear localization signal element. Residues D17–V31 form a nuclear export signal-like (NES-like) region. The C2H2-type zinc-finger motif lies at H49 to H73.

Belongs to the ZNF593/BUD20 C2H2-type zinc-finger protein family. As to quaternary structure, associates with pre-60S ribosomal particles; released from the pre-60S particle very early in the cytoplasm.

The protein localises to the nucleus. It localises to the cytoplasm. Involved in pre-60S ribosomal particles maturation by promoting the nuclear export of the 60S ribosome. Involved in positioning the proximal bud pole signal. This is Bud site selection protein 20 from Saccharomyces cerevisiae (strain ATCC 204508 / S288c) (Baker's yeast).